Consider the following 157-residue polypeptide: Increased recombination centers protein 23 (157 aa).

The Cytoplasmic segment spans residues methionine 1–glutamate 6. Residues isoleucine 7–isoleucine 29 form a helical membrane-spanning segment. The Lumenal segment spans residues proline 30–glycine 33. Residues leucine 34 to tyrosine 56 form a helical membrane-spanning segment. The Cytoplasmic portion of the chain corresponds to lysine 57–isoleucine 157.

Its subcellular location is the endoplasmic reticulum membrane. Its function is as follows. Is probably involved in a pathway contributing to genomic integrity. This Saccharomyces cerevisiae (strain ATCC 204508 / S288c) (Baker's yeast) protein is Increased recombination centers protein 23 (IRC23).